Reading from the N-terminus, the 42-residue chain is uncharacterized protein (42 aa).

A helical membrane pass occupies residues 10 to 30 (VANWVTVILMALAGYAVLALA).

Its subcellular location is the host membrane. This is an uncharacterized protein from Acinetobacter calcoaceticus (Arthrobacter siderocapsulatus).